The chain runs to 557 residues: Phosphomethylpyrimidine synthase (557 aa).

Substrate is bound by residues Asn197, Met226, Tyr255, His291, 311–313 (SRG), 352–355 (DGLR), and Glu391. Residue His395 participates in Zn(2+) binding. Position 418 (Tyr418) interacts with substrate. His459 serves as a coordination point for Zn(2+). Positions 539, 542, and 547 each coordinate [4Fe-4S] cluster.

It belongs to the ThiC family. As to quaternary structure, homodimer. [4Fe-4S] cluster serves as cofactor.

The enzyme catalyses 5-amino-1-(5-phospho-beta-D-ribosyl)imidazole + S-adenosyl-L-methionine = 4-amino-2-methyl-5-(phosphooxymethyl)pyrimidine + CO + 5'-deoxyadenosine + formate + L-methionine + 3 H(+). The protein operates within cofactor biosynthesis; thiamine diphosphate biosynthesis. Catalyzes the synthesis of the hydroxymethylpyrimidine phosphate (HMP-P) moiety of thiamine from aminoimidazole ribotide (AIR) in a radical S-adenosyl-L-methionine (SAM)-dependent reaction. The sequence is that of Phosphomethylpyrimidine synthase from Anaplasma phagocytophilum (strain HZ).